A 250-amino-acid chain; its full sequence is 23S rRNA (guanosine-2'-O-)-methyltransferase RlmB (250 aa).

3 residues coordinate S-adenosyl-L-methionine: Gly198, Leu218, and Leu227.

Belongs to the class IV-like SAM-binding methyltransferase superfamily. RNA methyltransferase TrmH family. RlmB subfamily.

Its subcellular location is the cytoplasm. The enzyme catalyses guanosine(2251) in 23S rRNA + S-adenosyl-L-methionine = 2'-O-methylguanosine(2251) in 23S rRNA + S-adenosyl-L-homocysteine + H(+). Its function is as follows. Specifically methylates the ribose of guanosine 2251 in 23S rRNA. This is 23S rRNA (guanosine-2'-O-)-methyltransferase RlmB from Pseudomonas syringae pv. tomato (strain ATCC BAA-871 / DC3000).